A 239-amino-acid chain; its full sequence is Proteasome subunit beta type-6 (239 aa).

Ala-2 is subject to N-acetylalanine. Residues 2 to 34 constitute a propeptide, removed in mature form; the sequence is AATLVAARGTRPAPAWGPEAIAPDWENREVSTG. Thr-35 (nucleophile) is an active-site residue. At Thr-69 the chain carries Phosphothreonine.

The protein belongs to the peptidase T1B family. In terms of assembly, the 26S proteasome consists of a 20S proteasome core and two 19S regulatory subunits. The 20S proteasome core is a barrel-shaped complex made of 28 subunits that are arranged in four stacked rings. The two outer rings are each formed by seven alpha subunits, and the two inner rings are formed by seven beta subunits. The proteolytic activity is exerted by three beta-subunits PSMB5, PSMB6 and PSMB7.

The protein localises to the cytoplasm. It is found in the nucleus. The catalysed reaction is Cleavage of peptide bonds with very broad specificity.. Its function is as follows. Component of the 20S core proteasome complex involved in the proteolytic degradation of most intracellular proteins. This complex plays numerous essential roles within the cell by associating with different regulatory particles. Associated with two 19S regulatory particles, forms the 26S proteasome and thus participates in the ATP-dependent degradation of ubiquitinated proteins. The 26S proteasome plays a key role in the maintenance of protein homeostasis by removing misfolded or damaged proteins that could impair cellular functions, and by removing proteins whose functions are no longer required. Associated with the PA200 or PA28, the 20S proteasome mediates ubiquitin-independent protein degradation. This type of proteolysis is required in several pathways including spermatogenesis (20S-PA200 complex) or generation of a subset of MHC class I-presented antigenic peptides (20S-PA28 complex). Within the 20S core complex, PSMB6 displays a peptidylglutamyl-hydrolyzing activity also termed postacidic or caspase-like activity, meaning that the peptides bond hydrolysis occurs directly after acidic residues. This Bos taurus (Bovine) protein is Proteasome subunit beta type-6 (PSMB6).